Consider the following 295-residue polypeptide: Elongation factor Ts (295 aa).

Residues 79–82 form an involved in Mg(2+) ion dislocation from EF-Tu region; it reads TDFV.

This sequence belongs to the EF-Ts family.

Its subcellular location is the cytoplasm. Functionally, associates with the EF-Tu.GDP complex and induces the exchange of GDP to GTP. It remains bound to the aminoacyl-tRNA.EF-Tu.GTP complex up to the GTP hydrolysis stage on the ribosome. The protein is Elongation factor Ts of Bacillus mycoides (strain KBAB4) (Bacillus weihenstephanensis).